A 236-amino-acid chain; its full sequence is DNA repair protein RecO (236 aa).

Belongs to the RecO family.

In terms of biological role, involved in DNA repair and RecF pathway recombination. The protein is DNA repair protein RecO of Haemophilus influenzae (strain PittGG).